The sequence spans 185 residues: NEDD8-conjugating enzyme UBE2F (185 aa).

The tract at residues 1–29 (MLTLASKLKREEGVRAGRTPAGSNDAAHR) is interaction with uba3. A UBC core domain is found at 32 to 185 (IRDRLLIKEV…VQDFIKNYAR (154 aa)). Catalysis depends on Cys-116, which acts as the Glycyl thioester intermediate.

Belongs to the ubiquitin-conjugating enzyme family. UBE2F subfamily.

It carries out the reaction [E1 NEDD8-activating enzyme]-S-[NEDD8 protein]-yl-L-cysteine + [E2 NEDD8-conjugating enzyme]-L-cysteine = [E1 NEDD8-activating enzyme]-L-cysteine + [E2 NEDD8-conjugating enzyme]-S-[NEDD8-protein]-yl-L-cysteine.. It functions in the pathway protein modification; protein neddylation. In terms of biological role, accepts the ubiquitin-like protein NEDD8 from the UBA3-NAE1 E1 complex and catalyzes its covalent attachment to other proteins. Together with the E3 ubiquitin ligase rnf7/rbx2, specifically neddylates cullin-5 (cul5). Does not neddylate cul1, cul2, cul3, cul4a or cul4b. This chain is NEDD8-conjugating enzyme UBE2F (ube2f), found in Danio rerio (Zebrafish).